The primary structure comprises 38 residues: uncharacterized protein (38 aa).

This is an uncharacterized protein from Archaeoglobus fulgidus (strain ATCC 49558 / DSM 4304 / JCM 9628 / NBRC 100126 / VC-16).